The following is a 238-amino-acid chain: Ribosomal RNA small subunit methyltransferase G (238 aa).

S-adenosyl-L-methionine contacts are provided by residues G106, L111, 157–158, and R170; that span reads IE.

Belongs to the methyltransferase superfamily. RNA methyltransferase RsmG family.

Its subcellular location is the cytoplasm. It carries out the reaction guanosine(527) in 16S rRNA + S-adenosyl-L-methionine = N(7)-methylguanosine(527) in 16S rRNA + S-adenosyl-L-homocysteine. Specifically methylates the N7 position of guanine in position 527 of 16S rRNA. The protein is Ribosomal RNA small subunit methyltransferase G of Psychrobacter cryohalolentis (strain ATCC BAA-1226 / DSM 17306 / VKM B-2378 / K5).